Consider the following 430-residue polypeptide: Pre-B-cell leukemia transcription factor 2 (430 aa).

Positions 1–52 (MDERLLGPPPPGGGRGGLGLVGAEPGGPGEPPGGGDPGGGSGGVPGGRGKQD) are disordered. Residues 13–48 (GGRGGLGLVGAEPGGPGEPPGGGDPGGGSGGVPGGR) are compositionally biased toward gly residues. A PBC domain is found at 48–243 (RGKQDIGDIL…VMILRSRFLD (196 aa)). Positions 55 to 134 (DILQQIMTIT…EGVAGPEKGG (80 aa)) are PBC-A. Phosphoserine is present on residues serine 136, serine 151, and serine 159. The PBC-B stretch occupies residues 137–243 (AAAAAAAAAS…VMILRSRFLD (107 aa)). Residues 244–306 (ARRKRRNFSK…NKRIRYKKNI (63 aa)) constitute a DNA-binding region (homeobox; TALE-type). Disordered regions lie at residues 327–347 (GGHS…GGSF) and 375–430 (LRHS…DTSN). Residues serine 330 and serine 395 each carry the phosphoserine modification. The span at 409–418 (VTPSSVTSPT) shows a compositional bias: polar residues.

Belongs to the TALE/PBX homeobox family. Forms heterodimers with MEIS1 and heterotrimers with MEIS1 and HOXA9. Interacts with PBXIP1.

It localises to the nucleus. Functionally, transcriptional activator that binds the sequence 5'-ATCAATCAA-3'. Activates transcription of PF4 in complex with MEIS1. This Mus musculus (Mouse) protein is Pre-B-cell leukemia transcription factor 2 (Pbx2).